The sequence spans 642 residues: Threonine--tRNA ligase (642 aa).

In terms of domain architecture, TGS spans 1–61; the sequence is MPVITLPDGS…ETDAELSIIT (61 aa). A catalytic region spans residues 243-534; the sequence is DHRKIGKQLD…LIEEYAGRFP (292 aa). Zn(2+)-binding residues include Cys334, His385, and His511.

This sequence belongs to the class-II aminoacyl-tRNA synthetase family. As to quaternary structure, homodimer. Zn(2+) is required as a cofactor.

It localises to the cytoplasm. The catalysed reaction is tRNA(Thr) + L-threonine + ATP = L-threonyl-tRNA(Thr) + AMP + diphosphate + H(+). In terms of biological role, catalyzes the attachment of threonine to tRNA(Thr) in a two-step reaction: L-threonine is first activated by ATP to form Thr-AMP and then transferred to the acceptor end of tRNA(Thr). Also edits incorrectly charged L-seryl-tRNA(Thr). The protein is Threonine--tRNA ligase of Shewanella baltica (strain OS195).